Here is a 632-residue protein sequence, read N- to C-terminus: 2-oxoacid:ferredoxin oxidoreductase subunit alpha (632 aa).

The YPITP motif signature appears at Tyr-253–Pro-257. Substrate contacts are provided by Thr-256 and Arg-344.

Heterodimer composed of an alpha and a beta subunit.

It localises to the cytoplasm. The catalysed reaction is a 2-oxocarboxylate + 2 oxidized [2Fe-2S]-[ferredoxin] + CoA = an acyl-CoA + 2 reduced [2Fe-2S]-[ferredoxin] + CO2 + H(+). Its function is as follows. Catalyzes the coenzyme A-dependent oxidative decarboxylation of different 2-oxoacids such as 2-oxoglutarate, pyruvate and 2-oxobutyrate to form their CoA derivatives. The chain is 2-oxoacid:ferredoxin oxidoreductase subunit alpha from Sulfolobus sp.